A 122-amino-acid polypeptide reads, in one-letter code: Acidic phospholipase A2 Tpu-E6c (122 aa).

7 disulfides stabilise this stretch: cysteine 26-cysteine 115, cysteine 28-cysteine 44, cysteine 43-cysteine 95, cysteine 49-cysteine 122, cysteine 50-cysteine 88, cysteine 57-cysteine 81, and cysteine 75-cysteine 86. Residues tyrosine 27, glycine 29, and glycine 31 each contribute to the Ca(2+) site. Histidine 47 is a catalytic residue. Aspartate 48 is a Ca(2+) binding site. The active site involves aspartate 89.

In terms of assembly, monomer. Ca(2+) is required as a cofactor. Expressed by the venom gland.

It localises to the secreted. It catalyses the reaction a 1,2-diacyl-sn-glycero-3-phosphocholine + H2O = a 1-acyl-sn-glycero-3-phosphocholine + a fatty acid + H(+). Its function is as follows. Snake venom phospholipase A2 (PLA2) that impairs hemostasis. It weakly inhibits ADP-induced platelet aggregation when tested on platelet rich plasma from human and rabbit blood (15-25% of inhibition at 5-10 ug of enzyme), and dose-dependently inhibits blood coagulation, possibly by inhibiting thrombin activation. Exhibits high hydrolytic activities toward L-dipalmitoyl phosphatidylcholine. PLA2 catalyzes the calcium-dependent hydrolysis of the 2-acyl groups in 3-sn-phosphoglycerides. This Craspedocephalus puniceus (Flat-nosed pitviper) protein is Acidic phospholipase A2 Tpu-E6c.